The following is a 528-amino-acid chain: Probable feruloyl esterase B-1 (528 aa).

The signal sequence occupies residues M1 to S19. 6 disulfide bridges follow: C29-C78, C64-C117, C190-C445, C259-C276, C285-C295, and C505-C527. N-linked (GlcNAc...) asparagine glycans are attached at residues N83 and N101. The Acyl-ester intermediate role is filled by S191. Positions 260, 263, 265, 267, and 269 each coordinate Ca(2+). N-linked (GlcNAc...) asparagine glycans are attached at residues N286, N354, and N385. Active-site charge relay system residues include D404 and H444.

The protein belongs to the tannase family.

It is found in the secreted. It carries out the reaction feruloyl-polysaccharide + H2O = ferulate + polysaccharide.. Involved in degradation of plant cell walls. Hydrolyzes the feruloyl-arabinose ester bond in arabinoxylans as well as the feruloyl-galactose and feruloyl-arabinose ester bonds in pectin. This is Probable feruloyl esterase B-1 (faeB-1) from Aspergillus fumigatus (strain ATCC MYA-4609 / CBS 101355 / FGSC A1100 / Af293) (Neosartorya fumigata).